The primary structure comprises 199 residues: Imidazoleglycerol-phosphate dehydratase (199 aa).

Belongs to the imidazoleglycerol-phosphate dehydratase family.

The protein localises to the cytoplasm. The catalysed reaction is D-erythro-1-(imidazol-4-yl)glycerol 3-phosphate = 3-(imidazol-4-yl)-2-oxopropyl phosphate + H2O. It functions in the pathway amino-acid biosynthesis; L-histidine biosynthesis; L-histidine from 5-phospho-alpha-D-ribose 1-diphosphate: step 6/9. The chain is Imidazoleglycerol-phosphate dehydratase from Kineococcus radiotolerans (strain ATCC BAA-149 / DSM 14245 / SRS30216).